The chain runs to 369 residues: Chanoclavine-I aldehyde reductase fgaOx3 (369 aa).

FMN contacts are provided by residues 23–25 (PMT), alanine 58, glutamine 100, and histidine 169. Histidine 169 and asparagine 172 together coordinate substrate. Tyrosine 174 acts as the Proton donor in catalysis. FMN contacts are provided by residues glycine 292, 316-317 (GR), and arginine 317. Tyrosine 344 is a substrate binding site.

Belongs to the NADH:flavin oxidoreductase/NADH oxidase family. Monomer. It depends on FMN as a cofactor.

It catalyses the reaction dihydrochanoclavine-I aldehyde + NADP(+) = chanoclavine-I aldehyde + NADPH + H(+). It participates in alkaloid biosynthesis; ergot alkaloid biosynthesis. In terms of biological role, chanoclavine-I aldehyde reductase; part of the gene cluster that mediates the biosynthesis of isofumigaclavines, fungal ergot alkaloids. The tryptophan dimethylallyltransferase ifgA catalyzes the first step of ergot alkaloid biosynthesis by condensing dimethylallyl diphosphate (DMAP) and tryptophan to form 4-dimethylallyl-L-tryptophan. The second step is catalyzed by the methyltransferase ifgB that methylates 4-dimethylallyl-L-tryptophan in the presence of S-adenosyl-L-methionine, resulting in the formation of N-methyl-dimethylallyl-L-tryptophan. The catalase ifgD and the FAD-dependent oxidoreductase ifgC then transform N-methyl-dimethylallyl-L-tryptophan to chanoclavine-I which is further oxidized by ifgE in the presence of NAD(+), resulting in the formation of chanoclavine-I aldehyde. The chanoclavine-I aldehyde reductases ifgG and/or fgaOx3 reduce chanoclavine-I aldehyde to dihydrochanoclavine-I aldehyde that spontaneously dehydrates to form 6,8-dimethyl-6,7-didehydroergoline. The festuclavine dehydrogenases ifgF1 and/or ifgF2 then catalyze the reduction of 6,8-dimethyl-6,7-didehydroergoline to form festuclavine. Hydrolysis of festuclavine by a yet undetermined cytochrome P450 monooxygenase (called ifgH) then leads to the formation of isofumigaclavine B which is in turn acetylated by ifgI to isofumigaclavine A. Penicillium roqueforti has interestingly at least two sets of genes for the consumption of chanoclavine-I aldehyde on three different loci, the OYEs ifgG/fgaOx3 and the festuclavine synthase homologs ifgF1/ifgF2. The reason for the duplication of these genes is unclear, probably to ensure the conversion of chanoclavine-I aldehyde by differential gene expression under various environmental conditions. The protein is Chanoclavine-I aldehyde reductase fgaOx3 of Penicillium roqueforti (strain FM164).